A 363-amino-acid chain; its full sequence is MAP kinase kinase mkk-4 (363 aa).

Residues 1–38 are disordered; sequence MVQEDDENLRNSMSLRPTSLSTRPTSLSVNGNEKTLPE. The segment covering 14–28 has biased composition (low complexity); sequence SLRPTSLSTRPTSLS. The 265-residue stretch at 66 to 330 folds into the Protein kinase domain; it reads LQDLGAIGNG…YDTLKSFDFY (265 aa). ATP is bound by residues 72–80 and Lys-95; that span reads IGNGNFGTV. Residue Asp-194 is the Proton acceptor of the active site.

Belongs to the protein kinase superfamily. STE Ser/Thr protein kinase family. MAP kinase kinase subfamily. In terms of tissue distribution, expressed in the pharynx, including the corpus, isthmus and terminal bulb.

The protein localises to the cytoplasm. The catalysed reaction is L-seryl-[protein] + ATP = O-phospho-L-seryl-[protein] + ADP + H(+). The enzyme catalyses L-threonyl-[protein] + ATP = O-phospho-L-threonyl-[protein] + ADP + H(+). It catalyses the reaction L-tyrosyl-[protein] + ATP = O-phospho-L-tyrosyl-[protein] + ADP + H(+). Functionally, activity is required in presynaptic neurons, in a dose-dependent manner, for normal presynaptic development and morphology. Plays a role in the formation of muscle connections, also called muscle arm extensions, between the body wall and the motor axons in the dorsal and ventral cord. This Caenorhabditis elegans protein is MAP kinase kinase mkk-4 (mkk-4).